The chain runs to 141 residues: Large ribosomal subunit protein uL11 (141 aa).

Belongs to the universal ribosomal protein uL11 family. In terms of assembly, part of the ribosomal stalk of the 50S ribosomal subunit. Interacts with L10 and the large rRNA to form the base of the stalk. L10 forms an elongated spine to which L12 dimers bind in a sequential fashion forming a multimeric L10(L12)X complex. In terms of processing, one or more lysine residues are methylated.

Functionally, forms part of the ribosomal stalk which helps the ribosome interact with GTP-bound translation factors. This Tropheryma whipplei (strain TW08/27) (Whipple's bacillus) protein is Large ribosomal subunit protein uL11.